The chain runs to 465 residues: Glycine--tRNA ligase (465 aa).

Substrate contacts are provided by arginine 98 and glutamate 174. ATP-binding positions include 206 to 208 (RNE), 216 to 221 (FRTREF), 290 to 291 (EL), and 334 to 337 (GADR). 221 to 225 (FEQME) provides a ligand contact to substrate. 330–334 (EPSLG) provides a ligand contact to substrate.

Belongs to the class-II aminoacyl-tRNA synthetase family. Homodimer.

It is found in the cytoplasm. It catalyses the reaction tRNA(Gly) + glycine + ATP = glycyl-tRNA(Gly) + AMP + diphosphate. Functionally, catalyzes the attachment of glycine to tRNA(Gly). The sequence is that of Glycine--tRNA ligase from Agathobacter rectalis (strain ATCC 33656 / DSM 3377 / JCM 17463 / KCTC 5835 / VPI 0990) (Eubacterium rectale).